The primary structure comprises 934 residues: Serine/threonine-protein kinase KIPK1 (934 aa).

6 disordered regions span residues 20–40, 70–113, 189–227, 305–343, 395–438, and 466–493; these read LPKH…KDLV, RLMS…RFVG, PLMP…FGLQ, SSSA…RPKQ, SIDD…SCNV, and EKET…DYSR. Polar residues-rich tracts occupy residues 82–94 and 212–227; these read SASA…TSPS and NPIS…FGLQ. A compositionally biased stretch (polar residues) spans 395–421; it reads SIDDNPPSYTSSHNPKICTDSLSSVSN. Residues 538–879 form the Protein kinase domain; it reads FNLLKKLGCG…SVEIKRHPFF (342 aa). Residues 544-552 and Lys-567 each bind ATP; that span reads LGCGDIGTV. Asp-663 (proton acceptor) is an active-site residue. The tract at residues 738–773 is disordered; it reads SSNQQQGRKPKRGDHLSKTQQHLSRSLPQLVAEPTE. A compositionally biased stretch (polar residues) spans 755–764; the sequence is KTQQHLSRSL.

Belongs to the protein kinase superfamily. Ser/Thr protein kinase family. Interacts with KCBP. Interacts with PERK8, PERK9, PERK10 and PERK13. In terms of processing, autophosphorylated. Expressed in roots, cauline leaves, flowers and siliques.

The protein resides in the cytoplasm. The protein localises to the nucleus. The enzyme catalyses L-seryl-[protein] + ATP = O-phospho-L-seryl-[protein] + ADP + H(+). It carries out the reaction L-threonyl-[protein] + ATP = O-phospho-L-threonyl-[protein] + ADP + H(+). Functionally, could be involved in the negative regulation of root growth. In Arabidopsis thaliana (Mouse-ear cress), this protein is Serine/threonine-protein kinase KIPK1.